The primary structure comprises 467 residues: Putative gluconeogenesis factor (467 aa).

Pro residues predominate over residues Met1–Ser12. The disordered stretch occupies residues Met1 to Arg27.

This sequence belongs to the gluconeogenesis factor family.

It is found in the cytoplasm. Required for morphogenesis under gluconeogenic growth conditions. In Deinococcus radiodurans (strain ATCC 13939 / DSM 20539 / JCM 16871 / CCUG 27074 / LMG 4051 / NBRC 15346 / NCIMB 9279 / VKM B-1422 / R1), this protein is Putative gluconeogenesis factor.